We begin with the raw amino-acid sequence, 95 residues long: Bombyxin F-1 (95 aa).

A signal peptide spans 1 to 19 (MKLVVIVLLVISVSILVSA). 3 disulfide bridges follow: cysteine 29–cysteine 82, cysteine 41–cysteine 95, and cysteine 81–cysteine 86. A propeptide spans 53 to 71 (NSDMVYEDSGMPELLPADT) (c peptide like).

It belongs to the insulin family. As to quaternary structure, heterodimer of a B chain and an A chain linked by two disulfide bonds.

The protein localises to the secreted. The chain is Bombyxin F-1 (BBXF1) from Bombyx mori (Silk moth).